Consider the following 58-residue polypeptide: UPF0391 membrane protein Bxeno_A2959 (58 aa).

2 helical membrane-spanning segments follow: residues 4 to 24 (WALF…TGVA) and 33 to 53 (FLFI…FVVT).

It belongs to the UPF0391 family.

It localises to the cell membrane. In Paraburkholderia xenovorans (strain LB400), this protein is UPF0391 membrane protein Bxeno_A2959.